The primary structure comprises 789 residues: Ribonucleoside-diphosphate reductase large subunit (789 aa).

Residues Thr207, 222-223 (SC), Gly253, 435-439 (NLCTE), and 620-624 (PTVSS) each bind substrate. A disulfide bond links Cys223 and Cys452. The Proton acceptor role is filled by Asn435. The active-site Cysteine radical intermediate is the Cys437. The active-site Proton acceptor is Glu439.

It belongs to the ribonucleoside diphosphate reductase large chain family. As to quaternary structure, heterotetramer composed of a homodimer of the large subunit (R1) and a homodimer of the small subunit (R2). Larger multisubunit protein complex are also active, composed of (R1)n(R2)n.

It carries out the reaction a 2'-deoxyribonucleoside 5'-diphosphate + [thioredoxin]-disulfide + H2O = a ribonucleoside 5'-diphosphate + [thioredoxin]-dithiol. Functionally, ribonucleoside-diphosphate reductase holoenzyme provides the precursors necessary for viral DNA synthesis. Allows virus growth in non-dividing cells, as well as reactivation from latency in infected hosts. Catalyzes the biosynthesis of deoxyribonucleotides from the corresponding ribonucleotides. This is Ribonucleoside-diphosphate reductase large subunit from Equus caballus (Horse).